Here is a 266-residue protein sequence, read N- to C-terminus: Interleukin-1 beta (266 aa).

Positions 1 to 113 (MATVPEPINE…ETSSDELLCD (113 aa)) are excised as a propeptide.

It belongs to the IL-1 family. In terms of assembly, monomer. In its precursor form, weakly interacts with full-length MEFV; the mature cytokine does not interact at all. Interacts with integrins ITGAV:ITGBV and ITGA5:ITGB1; integrin-binding is required for IL1B signaling. Interacts with cargo receptor TMED10; the interaction is direct and is required for the secretion of IL1B mature form. Interacts with HSP90AB1; the interaction facilitates cargo translocation into the ERGIC. Interacts with HSP90B1; the interaction facilitates cargo translocation into the ERGIC.

The protein localises to the cytoplasm. Its subcellular location is the cytosol. It localises to the secreted. The protein resides in the lysosome. It is found in the extracellular exosome. Functionally, potent pro-inflammatory cytokine. Initially discovered as the major endogenous pyrogen, induces prostaglandin synthesis, neutrophil influx and activation, T-cell activation and cytokine production, B-cell activation and antibody production, and fibroblast proliferation and collagen production. Promotes Th17 differentiation of T-cells. Synergizes with IL12/interleukin-12 to induce IFNG synthesis from T-helper 1 (Th1) cells. Plays a role in angiogenesis by inducing VEGF production synergistically with TNF and IL6. Involved in transduction of inflammation downstream of pyroptosis: its mature form is specifically released in the extracellular milieu by passing through the gasdermin-D (GSDMD) pore. This chain is Interleukin-1 beta (IL1B), found in Ovis aries (Sheep).